A 1499-amino-acid chain; its full sequence is DNA-directed RNA polymerase subunit beta' (1499 aa).

Zn(2+) is bound by residues Cys67, Cys69, Cys82, and Cys85. Residues Asp499, Asp501, and Asp503 each contribute to the Mg(2+) site. Zn(2+) contacts are provided by Cys867, Cys943, Cys950, and Cys953.

It belongs to the RNA polymerase beta' chain family. As to quaternary structure, the RNAP catalytic core consists of 2 alpha, 1 beta, 1 beta' and 1 omega subunit. When a sigma factor is associated with the core the holoenzyme is formed, which can initiate transcription. The cofactor is Mg(2+). Zn(2+) serves as cofactor.

It carries out the reaction RNA(n) + a ribonucleoside 5'-triphosphate = RNA(n+1) + diphosphate. Functionally, DNA-dependent RNA polymerase catalyzes the transcription of DNA into RNA using the four ribonucleoside triphosphates as substrates. The sequence is that of DNA-directed RNA polymerase subunit beta' from Prosthecochloris aestuarii (strain DSM 271 / SK 413).